The following is a 333-amino-acid chain: UPF0284 protein TGAM_0534 (333 aa).

Belongs to the UPF0284 family.

The protein is UPF0284 protein TGAM_0534 of Thermococcus gammatolerans (strain DSM 15229 / JCM 11827 / EJ3).